We begin with the raw amino-acid sequence, 229 residues long: Potassium/proton antiporter CemA (229 aa).

A run of 4 helical transmembrane segments spans residues 7–27 (FTPL…SLSF), 114–134 (IICF…LVIL), 154–174 (ILLV…ELMI), and 189–209 (IISG…KYWI).

Belongs to the CemA family.

The protein localises to the plastid. The protein resides in the chloroplast inner membrane. The enzyme catalyses K(+)(in) + H(+)(out) = K(+)(out) + H(+)(in). Functionally, contributes to K(+)/H(+) antiport activity by supporting proton efflux to control proton extrusion and homeostasis in chloroplasts in a light-dependent manner to modulate photosynthesis. Prevents excessive induction of non-photochemical quenching (NPQ) under continuous-light conditions. Indirectly promotes efficient inorganic carbon uptake into chloroplasts. The polypeptide is Potassium/proton antiporter CemA (Acorus calamus var. americanus (American sweet flag)).